Consider the following 265-residue polypeptide: Probable aquaporin TIP3-2 (265 aa).

2 helical membrane passes run 32–52 (LSEFVATAVFVFAAEGSVYGL) and 62–82 (LGGLLVVAVAHALALAAAVAV). An NPA 1 motif is present at residues 92–94 (NPA). The next 3 membrane-spanning stretches (helical) occupy residues 110 to 130 (AALYWAAQLLGAVLAVLLLRL), 151 to 171 (ALLLEVVMTFGLVYTVYATAV), and 179 to 199 (DIAPLAIGLVAGANILAGGPF). The NPA 2 motif lies at 205–207 (NPA). Residues 223–243 (WVYWLGPLIGAGMAGALYEFV) form a helical membrane-spanning segment.

It belongs to the MIP/aquaporin (TC 1.A.8) family. TIP (TC 1.A.8.10) subfamily. Expressed in leaves and at lower levels in roots.

Its subcellular location is the vacuole membrane. In terms of biological role, aquaporins facilitate the transport of water and small neutral solutes across cell membranes. May be involved in transport from the vacuolar compartment to the cytoplasm. In Oryza sativa subsp. japonica (Rice), this protein is Probable aquaporin TIP3-2 (TIP3-2).